We begin with the raw amino-acid sequence, 305 residues long: Ornithine carbamoyltransferase (305 aa).

Carbamoyl phosphate is bound by residues 48–51, Arg99, and 126–129; these read STRT and HPCQ. L-ornithine contacts are provided by residues Asn157, Asp222, and 226-227; that span reads SM. Carbamoyl phosphate-binding positions include 262–263 and Arg290; that span reads CL.

It belongs to the aspartate/ornithine carbamoyltransferase superfamily. OTCase family.

It localises to the cytoplasm. It carries out the reaction carbamoyl phosphate + L-ornithine = L-citrulline + phosphate + H(+). The protein operates within amino-acid biosynthesis; L-arginine biosynthesis; L-arginine from L-ornithine and carbamoyl phosphate: step 1/3. Its function is as follows. Reversibly catalyzes the transfer of the carbamoyl group from carbamoyl phosphate (CP) to the N(epsilon) atom of ornithine (ORN) to produce L-citrulline. The sequence is that of Ornithine carbamoyltransferase (argF) from Methanocaldococcus jannaschii (strain ATCC 43067 / DSM 2661 / JAL-1 / JCM 10045 / NBRC 100440) (Methanococcus jannaschii).